A 420-amino-acid polypeptide reads, in one-letter code: Anaerobic glycerol-3-phosphate dehydrogenase subunit B (420 aa).

The protein belongs to the anaerobic G-3-P dehydrogenase subunit B family. Composed of a catalytic GlpA/B dimer and of membrane bound GlpC. Requires FMN as cofactor.

The catalysed reaction is a quinone + sn-glycerol 3-phosphate = dihydroxyacetone phosphate + a quinol. It functions in the pathway polyol metabolism; glycerol degradation via glycerol kinase pathway; glycerone phosphate from sn-glycerol 3-phosphate (anaerobic route): step 1/1. Conversion of glycerol 3-phosphate to dihydroxyacetone. Uses fumarate or nitrate as electron acceptor. The polypeptide is Anaerobic glycerol-3-phosphate dehydrogenase subunit B (Pectobacterium carotovorum subsp. carotovorum (strain PC1)).